The primary structure comprises 515 residues: Adenine DNA glycosylase (515 aa).

Residues 1–24 show a composition bias toward basic residues; sequence MKKLQASVRSHKKQPANHKRRRTR. Positions 1-38 are disordered; that stretch reads MKKLQASVRSHKKQPANHKRRRTRALSSSQAKPSSLDG. Glu105 functions as the Proton donor/acceptor in the catalytic mechanism. The [4Fe-4S] cluster site is built by Cys261, Cys268, Cys271, and Cys277. The Nudix hydrolase domain occupies 335–466; the sequence is PREEYSATCV…AMKKVFRMYE (132 aa). The short motif at 376–398 is the Nudix box element; that stretch reads VTLEPSEQHQHKALLQELQRWCG. Residues 468-494 form a disordered region; sequence HRQGTRKGSKRSQVCPPSSRKKPSLGQ.

This sequence belongs to the Nth/MutY family. The cofactor is [4Fe-4S] cluster. As to expression, expressed in heart, lung, liver, intestine, brain and thymus.

The protein localises to the nucleus. The protein resides in the mitochondrion. The catalysed reaction is Hydrolyzes free adenine bases from 7,8-dihydro-8-oxoguanine:adenine mismatched double-stranded DNA, leaving an apurinic site.. In terms of biological role, involved in oxidative DNA damage repair. Initiates repair of A*oxoG to C*G by removing the inappropriately paired adenine base from the DNA backbone. Possesses both adenine and 2-OH-A DNA glycosylase activities. The protein is Adenine DNA glycosylase (Mutyh) of Mus musculus (Mouse).